Here is a 159-residue protein sequence, read N- to C-terminus: Intron-encoded endonuclease ai4 (159 aa).

The protein belongs to the LAGLIDADG endonuclease family.

Its subcellular location is the mitochondrion. In terms of biological role, mitochondrial DNA endonuclease involved in intron homing. In Dictyostelium discoideum (Social amoeba), this protein is Intron-encoded endonuclease ai4 (ai4).